Consider the following 863-residue polypeptide: MIRFAQREYTDEEIYEILADPVREWFRGKFGTFTPPQRYAVIEIHKGENVLISSPTGSGKTLSAFLAAINELILLGKEGKLEDKIYVLYVSPLRALNNDIRRNLEEPLREIREVAHEMGYDLPEIRVAVRTSDTSSYEKQKMVKKPPHILITTPESLAIALNAPKFSERLKTVKYVIVDEVHALAENKRGTHLMLSLERLQNLAGDFVRIGLSATIHPLEEVAKFVFGFNDDGTPRSGLIVDVSFAKKTEIKVESVVGDLVYTDAATLSEALYKRLDELIEQHRTTLIFTNTRSGAERVAYHLKKKFPKYAELIEAHHSSLSRDVRLEVEEKLKKGELRCVVSSTSLELGIDIGSIDLVVLIGSPKSVNRALQRIGRAGHRLHEVSKGIILVLDRDDLVECTVLAYNARNRRLDRIKIPQNPLDVLVQHLLGMALEKVWDINEAYKLVRRAYPYHNLSFEDFMSVLRYLAGEYAGLEEKKVYAKIWLDEKEGKFGRRGKMTRAIYYMNTGTIPDEAKIEVYTLDRRFIGTVEEEFAERLMPGDIFVLAGRTYEFKKSRGNRIYVEPKEGAKPTIPAWFSEMLPLSFDLALDVQRFRKEVKELLNNPKAEQILMEKYRIDEKAAKAILGYFREQAKYSTIPDDGILLVEEVLEERRAKYFFHTLIGRRANEALSRAFAYLVSKKKRCNVGIAISDNGFMLILPREKRLSEEDIRTLFQLEDLRETLKKALDNTELLKRRFRHVANRGLLILRRYMGRKKSLSRQQLNAQTLLRLLKKNYPDFPLLKEVYREIMEDKMDIKNAELFLSWVKEGKIKIVFEQNELPSPFAFNLEIIGASDVVLMEDRRELIKQLHRKIMAMIGELE.

Phe30, Gln37, Lys60, Thr61, Asp179, Glu180, Arg377, and His380 together coordinate ATP. One can recognise a Helicase ATP-binding domain in the interval 41–234; sequence VIEIHKGENV…FVFGFNDDGT (194 aa). The DEAH box signature appears at 179–182; sequence DEVH. A Helicase C-terminal domain is found at 275–424; that stretch reads RLDELIEQHR…RIKIPQNPLD (150 aa). The segment at 418–512 is WH domain; that stretch reads IPQNPLDVLV…AIYYMNTGTI (95 aa). The tract at residues 513–863 is domain 4; it reads PDEAKIEVYT…KIMAMIGELE (351 aa).

It belongs to the Lhr helicase family. Lhr-Core subfamily. As to quaternary structure, monomer.

It carries out the reaction ATP + H2O = ADP + phosphate + H(+). With respect to regulation, unwinding of dsRNA duplexes is inhibited by AMP-PMP and ATP-gamma-S. A DNA:RNA helicase with a significant strand annealing activity, probably involved in DNA repair and RNA transactions. In vitro has a slow helicase activity with a preference for 3'-overhang duplexes; displaces RNA from 3'-overhang DNA:RNA or RNA:RNA duplexes. 3'-tailed double-stranded (ds)DNA is not unwound. The slow helicase activity on RNA duplexes is ATP-independent. Has strand annealing properties in the absence of ATP; forms 3'-overhang DNA:RNA, 3'-overhang dsRNA and 3'-overhang dsDNA duplexes but not 5'-overhang duplexes. A nucleic acid-dependent ATPase; single-stranded (ss)DNA and RNA are equally stimulatory. Binds ssDNA, RNA, dsDNA and dsRNA duplexes. The protein is ATP-dependent helicase Lhr-Core protein 2 of Thermococcus barophilus (strain DSM 11836 / MP).